The following is a 771-amino-acid chain: Hyperosmolality-gated Ca2+ permeable channel 1.3 (771 aa).

Residues 7–27 (IGVAAAINILTAIIFLLAFAI) traverse the membrane as a helical segment. Ser-54 carries the phosphoserine modification. The next 9 membrane-spanning stretches (helical) occupy residues 101–121 (IYLIGLKIFVPIALLAWSILV), 158–178 (FWTHLVMAYAFTFWTCYVLMK), 375–395 (LIMHIAFFFLTFFFMIPIAFV), 427–447 (FLPGIVLKLFLIFLPSILMVM), 467–487 (YYIFNLINVFLGSVITGSAFE), 512–532 (ATFFITYIMVDGWAGIAGEIL), 584–604 (PVTPVLLPFIIIFFALAYLVF), 630–650 (IISALIIAQILLMGLLSTKGA), and 651–671 (AQSTPFLLFLPIITFFFHRYC). The interval 744–771 (VPTKRQSRINTPAVSHASRGSSRSPPSK) is disordered. The span at 751 to 771 (RINTPAVSHASRGSSRSPPSK) shows a compositional bias: polar residues.

The protein belongs to the CSC1 (TC 1.A.17) family. In terms of processing, phosphorylated at Ser-54 by BIK1 in response to pathogen-associated molecular pattern (PAMP) perception, promoting its activation. Preferentially expressed in guard cells.

Its subcellular location is the cell membrane. The catalysed reaction is Ca(2+)(in) = Ca(2+)(out). With respect to regulation, activated following phosphorylation at Ser-54 by BIK1. Functionally, calcium-permeable channel that plays a key role in plant stomatal immunity. In response to pathogen-associated molecular pattern (PAMP) perception, phosphorylated and activated by BIK1, triggering rapid influx of calcium ions across the plasma membrane, leading to stomatal closure. The chain is Hyperosmolality-gated Ca2+ permeable channel 1.3 from Arabidopsis thaliana (Mouse-ear cress).